A 991-amino-acid chain; its full sequence is Transcription factor ROB1 (991 aa).

Positions 17 to 43 (CTVCRTIKRKCDGNTPCSNCLKRNQEC) form a DNA-binding region, zn(2)-C6 fungal-type. Disordered stretches follow at residues 150-188 (LNQQQQQQQPSPQSLSQSSASEVSTRSSPASPNSTISLA), 792-875 (FYAQ…EDNP), and 901-959 (QEEG…PQLP). A compositionally biased stretch (low complexity) spans 152–168 (QQQQQQQPSPQSLSQSS). Over residues 169–187 (ASEVSTRSSPASPNSTISL) the composition is skewed to polar residues. Residues 795 to 806 (QQQQQQQQQQQQ) show a composition bias toward low complexity. Basic and acidic residues-rich tracts occupy residues 807-817 (PKHEYHDHQQE) and 825-855 (QEEHSEKDIKIEIKDEPQPQEEHIHQDYPMK). Low complexity predominate over residues 907–931 (QQQQQQQQEQVQQEQVQQEQVQQDQ).

Its subcellular location is the nucleus. In terms of biological role, transcription factor that mediates conventional biofilm formation and plays a key role in microcolony formation under both flow and static conditions and to epithelial surfaces. Modulates infection of mammalian hosts. The polypeptide is Transcription factor ROB1 (Candida albicans (strain SC5314 / ATCC MYA-2876) (Yeast)).